Consider the following 486-residue polypeptide: UDP-N-acetylglucosamine pyrophosphorylase (486 aa).

Positions methionine 109–glycine 112 match the Substrate binding motif. UTP contacts are provided by residues methionine 109–glycine 112, lysine 123, glutamine 199, and glycine 226. Asparagine 227 serves as a coordination point for substrate. Aspartate 257 provides a ligand contact to UTP. Positions glutamate 309–tyrosine 310 match the Substrate binding motif. Lysine 389 is a UTP binding site. A substrate-binding site is contributed by lysine 421.

This sequence belongs to the UDPGP type 1 family.

Its subcellular location is the cytoplasm. The catalysed reaction is N-acetyl-alpha-D-glucosamine 1-phosphate + UTP + H(+) = UDP-N-acetyl-alpha-D-glucosamine + diphosphate. Its pathway is nucleotide-sugar biosynthesis; UDP-N-acetyl-alpha-D-glucosamine biosynthesis; UDP-N-acetyl-alpha-D-glucosamine from N-acetyl-alpha-D-glucosamine 1-phosphate: step 1/1. The chain is UDP-N-acetylglucosamine pyrophosphorylase (UAP1) from Candida albicans (Yeast).